The sequence spans 210 residues: Large ribosomal subunit protein uL4 (210 aa).

It belongs to the universal ribosomal protein uL4 family. In terms of assembly, part of the 50S ribosomal subunit.

In terms of biological role, one of the primary rRNA binding proteins, this protein initially binds near the 5'-end of the 23S rRNA. It is important during the early stages of 50S assembly. It makes multiple contacts with different domains of the 23S rRNA in the assembled 50S subunit and ribosome. Functionally, forms part of the polypeptide exit tunnel. The polypeptide is Large ribosomal subunit protein uL4 (rplD) (Thermus thermophilus).